We begin with the raw amino-acid sequence, 316 residues long: Aquaglyceroporin-2 (316 aa).

The disordered stretch occupies residues 1–31 (MADERGPINKSGPSSTYGATENNGESGGTRG). Residues 1 to 59 (MADERGPINKSGPSSTYGATENNGESGGTRGAPATEDVIVIQDSGWYYIKFRFKEPFAE) lie on the Cytoplasmic side of the membrane. The segment covering 11 to 24 (SGPSSTYGATENNG) has biased composition (polar residues). The helical transmembrane segment at 60–80 (FLGTFILVAFGVGAIAQTVLS) threads the bilayer. At 81–86 (KGATGN) the chain is on the extracellular side. A helical membrane pass occupies residues 87 to 107 (WITIALGFGLGLALGIAVSGH). Residues 108 to 131 (YSGGHLNPAVTITLAIYRKFPWVK) lie on the Cytoplasmic side of the membrane. Residues 114–116 (NPA) carry the NPA 1 motif. Residues 132 to 152 (VPVYITAQVLGAFVAAAVIYL) form a helical membrane-spanning segment. Residues 153–187 (NYLPAIYNFAGDKRDVIGANATAGIFATYPQPFMS) lie on the Extracellular side of the membrane. The N-linked (GlcNAc...) asparagine glycan is linked to Asn172. The chain crosses the membrane as a helical span at residues 188-208 (IGGAFFSEALGTFFLLFVILA). Over 209 to 219 (MTDERNVPTTR) the chain is Cytoplasmic. Residues 220–240 (IVAPITIGLTLTAIAISLGFE) traverse the membrane as a helical segment. The Extracellular segment spans residues 241–271 (TGFSLNAARDFGPRLFTFFIGYGVEVFTAYK). The NPA 2 signature appears at 246 to 248 (NAA). Residues 272–292 (FYFWIPLVAPIVGGLVAGFVY) traverse the membrane as a helical segment. Residues 293 to 316 (DSLLYWGEKSFLNKNVHHEHRAVA) lie on the Cytoplasmic side of the membrane.

The protein belongs to the MIP/aquaporin (TC 1.A.8) family.

Its subcellular location is the cell membrane. It is found in the membrane. The enzyme catalyses H2O(in) = H2O(out). The catalysed reaction is glycerol(in) = glycerol(out). Its activity is regulated as follows. Polyethylene glycol (PEG) stimulates whereas glycerol inhibits the aquaporin activity. In terms of biological role, water channel required to facilitate the transport of water across membranes. Stimulates plant drought tolerance by facilitating the transport of water from the arbuscular mycorrhiza fungus to host plants. In Rhizophagus irregularis (Arbuscular mycorrhizal fungus), this protein is Aquaglyceroporin-2.